The following is a 171-amino-acid chain: Zinc uptake regulation protein (171 aa).

The protein belongs to the Fur family.

Its function is as follows. Acts as a negative controlling element, employing Zn(2+) as a cofactor to bind the operator of the repressed genes (znuACB). This is Zinc uptake regulation protein (zur) from Escherichia coli (strain K12).